The following is a 443-amino-acid chain: Exodeoxyribonuclease 7 large subunit (443 aa).

The protein belongs to the XseA family. In terms of assembly, heterooligomer composed of large and small subunits.

The protein localises to the cytoplasm. The catalysed reaction is Exonucleolytic cleavage in either 5'- to 3'- or 3'- to 5'-direction to yield nucleoside 5'-phosphates.. Functionally, bidirectionally degrades single-stranded DNA into large acid-insoluble oligonucleotides, which are then degraded further into small acid-soluble oligonucleotides. In Vibrio campbellii (strain ATCC BAA-1116), this protein is Exodeoxyribonuclease 7 large subunit.